We begin with the raw amino-acid sequence, 363 residues long: Electron transfer flavoprotein subunit alpha, mitochondrial (363 aa).

A mitochondrion-targeting transit peptide spans 1–24; the sequence is MTRTVLLRALTKNKFVASNAPRSI. 303-331 contacts FAD; the sequence is LYMAFGVSGAIQHLAGIKDSKVIVAVNKD.

It belongs to the ETF alpha-subunit/FixB family. As to quaternary structure, heterodimer of an alpha and a beta subunit. It depends on FAD as a cofactor.

It localises to the mitochondrion matrix. Functionally, the electron transfer flavoprotein serves as a specific electron acceptor for several dehydrogenases, including five acyl-CoA dehydrogenases, glutaryl-CoA and sarcosine dehydrogenase. It transfers the electrons to the main mitochondrial respiratory chain via ETF-ubiquinone oxidoreductase (ETF dehydrogenase). Involved in leucine catabolism and in phytol degradation. This Arabidopsis thaliana (Mouse-ear cress) protein is Electron transfer flavoprotein subunit alpha, mitochondrial (ETFA).